Reading from the N-terminus, the 72-residue chain is Translation initiation factor IF-1 (72 aa).

The region spanning 1 to 72 (MAKDDVIQMQ…SRARIVFRAK (72 aa)) is the S1-like domain.

This sequence belongs to the IF-1 family. In terms of assembly, component of the 30S ribosomal translation pre-initiation complex which assembles on the 30S ribosome in the order IF-2 and IF-3, IF-1 and N-formylmethionyl-tRNA(fMet); mRNA recruitment can occur at any time during PIC assembly.

It is found in the cytoplasm. One of the essential components for the initiation of protein synthesis. Stabilizes the binding of IF-2 and IF-3 on the 30S subunit to which N-formylmethionyl-tRNA(fMet) subsequently binds. Helps modulate mRNA selection, yielding the 30S pre-initiation complex (PIC). Upon addition of the 50S ribosomal subunit IF-1, IF-2 and IF-3 are released leaving the mature 70S translation initiation complex. The polypeptide is Translation initiation factor IF-1 (Burkholderia mallei (strain NCTC 10247)).